The chain runs to 104 residues: Pole-localizer protein TmaR (104 aa).

2 coiled-coil regions span residues 7–34 (IVNQ…NRKR) and 76–96 (SAEI…LTEE).

The protein belongs to the pole-localizer TmaR family.

The protein localises to the cytoplasm. Pole-localizer protein involved in the regulation of several cellular processes. The protein is Pole-localizer protein TmaR of Vibrio atlanticus (strain LGP32) (Vibrio splendidus (strain Mel32)).